The sequence spans 152 residues: HSFVYEKLFSLWNTILYVCLIWTLTVVATVPNFFVGSLEYDPRIYSCTFVQTVSSSYTITVVVIHFILPITVVTFCYLRIWILVIQVRRKVKSEFKPRMKQSDFRNFLTMFVVFVIFAFCWAPLNFIGLAVSINPTEVAPKIPEWLFVVSYF.

The Cytoplasmic segment spans residues 1 to 12 (HSFVYEKLFSLW). The chain crosses the membrane as a helical span at residues 13 to 33 (NTILYVCLIWTLTVVATVPNF). At 34–57 (FVGSLEYDPRIYSCTFVQTVSSSY) the chain is on the extracellular side. Residues 58–78 (TITVVVIHFILPITVVTFCYL) form a helical membrane-spanning segment. At 79–110 (RIWILVIQVRRKVKSEFKPRMKQSDFRNFLTM) the chain is on the cytoplasmic side. Residues 111-131 (FVVFVIFAFCWAPLNFIGLAV) form a helical membrane-spanning segment. The Extracellular portion of the chain corresponds to 132 to 144 (SINPTEVAPKIPE). The chain crosses the membrane as a helical span at residues 145–152 (WLFVVSYF).

Belongs to the G-protein coupled receptor 1 family.

The protein localises to the cell membrane. In terms of biological role, high affinity receptor for melatonin. The activity of this receptor is mediated by pertussis toxin sensitive G proteins that inhibits adenylate cyclase activity. The sequence is that of Melatonin receptor type 1B (mtnr1b) from Xenopus laevis (African clawed frog).